We begin with the raw amino-acid sequence, 169 residues long: Peptide deformylase (169 aa).

Fe cation is bound by residues cysteine 94 and histidine 136. Residue glutamate 137 is part of the active site. Histidine 140 contributes to the Fe cation binding site.

It belongs to the polypeptide deformylase family. It depends on Fe(2+) as a cofactor.

The enzyme catalyses N-terminal N-formyl-L-methionyl-[peptide] + H2O = N-terminal L-methionyl-[peptide] + formate. Functionally, removes the formyl group from the N-terminal Met of newly synthesized proteins. Requires at least a dipeptide for an efficient rate of reaction. N-terminal L-methionine is a prerequisite for activity but the enzyme has broad specificity at other positions. This chain is Peptide deformylase, found in Desulfotalea psychrophila (strain LSv54 / DSM 12343).